The primary structure comprises 426 residues: Histidine--tRNA ligase (426 aa).

This sequence belongs to the class-II aminoacyl-tRNA synthetase family. Homodimer.

Its subcellular location is the cytoplasm. The enzyme catalyses tRNA(His) + L-histidine + ATP = L-histidyl-tRNA(His) + AMP + diphosphate + H(+). The chain is Histidine--tRNA ligase from Streptococcus equi subsp. zooepidemicus (strain H70).